The chain runs to 185 residues: Elongation factor P (185 aa).

It belongs to the elongation factor P family.

It is found in the cytoplasm. It functions in the pathway protein biosynthesis; polypeptide chain elongation. In terms of biological role, involved in peptide bond synthesis. Stimulates efficient translation and peptide-bond synthesis on native or reconstituted 70S ribosomes in vitro. Probably functions indirectly by altering the affinity of the ribosome for aminoacyl-tRNA, thus increasing their reactivity as acceptors for peptidyl transferase. The protein is Elongation factor P of Petrotoga mobilis (strain DSM 10674 / SJ95).